A 413-amino-acid polypeptide reads, in one-letter code: Inactive squalene synthase 2 (413 aa).

G2 carries the post-translational modification N-acetylglycine. A run of 2 helical transmembrane segments spans residues 283 to 303 (AIFQSCAIPQIVAIGTLALCY) and 390 to 410 (AIFVVMFVLLLAIVVVYLKAN).

The protein belongs to the phytoene/squalene synthase family. Requires Mg(2+) as cofactor. Mn(2+) is required as a cofactor. As to expression, mostly expressed in hypocotyls, leaves and cotyledons, and, to a lower extent, in stems.

It is found in the endoplasmic reticulum membrane. This is Inactive squalene synthase 2 from Arabidopsis thaliana (Mouse-ear cress).